Here is a 72-residue protein sequence, read N- to C-terminus: QIYDTSCKGVYDRGLFSDLEHVCDDCYNLYRNSYVASACRSNCYSNVVFRQCMEELLLMDEFDKYARAVQIV.

At Gln-1 the chain carries Pyrrolidone carboxylic acid; partial. 3 disulfide bridges follow: Cys-7-Cys-43, Cys-23-Cys-39, and Cys-26-Cys-52. At Val-72 the chain carries Valine amide.

It belongs to the arthropod CHH/MIH/GIH/VIH hormone family. In terms of processing, the N-terminus forms pyrrolidone carboxylic acid in isoform CHH-II and is free in isoform CHH-I. As to expression, produced by the medulla terminalis X-organ in the eyestalks and transported to the sinus gland where they are stored and released.

It localises to the secreted. Hormone found in the sinus gland of isopods and decapods which controls the blood sugar level. Has a secretagogue action over the amylase released from the midgut gland. May act as a stress hormone and may be involved in the control of molting and reproduction. This is Crustacean hyperglycemic hormone from Cancer pagurus (Rock crab).